Reading from the N-terminus, the 136-residue chain is NADPH-dependent 7-cyano-7-deazaguanine reductase (136 aa).

Cysteine 50 (thioimide intermediate) is an active-site residue. Aspartate 57 serves as the catalytic Proton donor. Residues 72–74 (YEL) and 91–92 (HE) each bind substrate.

This sequence belongs to the GTP cyclohydrolase I family. QueF type 1 subfamily.

It is found in the cytoplasm. The enzyme catalyses 7-aminomethyl-7-carbaguanine + 2 NADP(+) = 7-cyano-7-deazaguanine + 2 NADPH + 3 H(+). It participates in tRNA modification; tRNA-queuosine biosynthesis. Its function is as follows. Catalyzes the NADPH-dependent reduction of 7-cyano-7-deazaguanine (preQ0) to 7-aminomethyl-7-deazaguanine (preQ1). This Prochlorococcus marinus (strain MIT 9301) protein is NADPH-dependent 7-cyano-7-deazaguanine reductase.